The primary structure comprises 2183 residues: MLLVCPCFFLLVVLGTRWAGWGSHQAEAAQLRQFYVAAQGILWNYHPEPTDPSLNSIPSFKKIVYREYEQYFKKEKPRSSNSGLLGPTLYAEVGDVIKVHFRNKADKPLSIHPQGIKYSKFSEGASYADHTFPAERKDDAVAPGEEYTYEWIVSEDSGPTPDDPPCLTHIYYSYENLTQDFNSGLIGPLLICKKGTLTEDGTQKMFDKQHVLLFAVFDESKSRSQSPSLMYTINGFVNKTMPDITVCAHDHVSWHLIGMSSGPELFSIHFNGQVLEQNQHKVSTVTLVSATSTTANMTMSPEGRWIVSSLIPKHYQAGMQAYIDIKNCPKKTRSPKTLTREQRRYMKRWEYFIAAEEVIWNYAPVIPANMDKIYRSQHLDNFSNQIGKHYKKVIYRQYEEETFTKRTDNPSIKQSGILGPVIRAQVRDTLKIVFKNMASRPYSIYPHGVTFSPYEDGINSSSTSGSHTTIRPVQPGETFTYKWNILEFDEPTENDAQCLTRPYYSDVDVTRDIASGLIGLLLICKSRSLDQRGVQRVADIEQQAVFAVFDENKSWYIEDNINKFCENPDEVKRDDPKFYESNIMSTINGYVPESISTLGFCFDDTVQWHFCSVGTHDDILTIHFTGHSFIYGRRHEDTLTLFPMRGESVTVTMDNVGTWMLTTMNSNPKRRNLRLRFRDVKCNRDYDNEDSYEIYEPPAPTSMTTRRIHDSLENEFGIDNEDDDYQYLLASSLGIRSFKNSSLNPEENEFNLTALALENSSEFISPSTDRVVDSNSSRILSKIINNNLKDFQRTLPGSGATVAGTLLRNLIGLDENFVLNSSTEHRSSSYHENDMENPQSNITMVYLLPLGPKGSGNREQDKPKTIKTGRPHMMKHRFSWMKAPAGKTGRHSNPKNSYSGMKSEEDIPSELIPLKQKITSKFLNRRWRVASEKGSYEIIAANGEDTDVDKLTNSPQNQNITVPRGESTSHTNTTRKPSDLPTFSGVGHKSPHVRQEEENSGFQKRQLFIRTRKKKKNKKLALHSPLSPRGFDPLRGHNHSPFPDRRLLNHSLLLHKSNETALSPDLNQTSPSMSTDRSLPDYNQYSKNDTEQMSSSLDLYQSVPAEEHSPTFPAQDPDQTHSTTDPSYRSSPPELSQGLDYDLSHDFYPDDIGLTSFFPDQSQKSSFSSDDDQAIPSSDLSLFTISPELDQTIIYPDLDQLLLSPEDNQKTSSPDLGQVPLSPDDNQKTSSPDLGQVSLSPDDNQKTSSPDLGQVPLSLDDNQKTTSPDLGQVPLSPDDNQMITSPDLGQVPLSSDNQKTSSPDLGQVPLFPEDNQNYFLDLSQVPLSSDQNQETSSTDLLTLSPDFGQTVLSPDLDQLPLPSDNSQVTVSPDLSLLTLSPDFNEIILAPDLGQVTLSPDLIQTNPALNHGHKASSADPDQASYPPDSGQASSLPELNRTLPHPDLTHIPPPSPSPTLNNTSLSRKFNPLVVVGLSRVDGDDVEIVPSEEPERIDEDYAEDDFVTYNDPYRTDTRTDVNSSRNPDTIAAWYLRGHGGHKKFYYIAAEEITWNYAEFAQSEMDHEDTGHTPKDTTYKKVVFRKYLDSTFTSRDPRAEYEEHLGILGPVIRAEVDDVIQVRFKNLASRPYSLHAHGLSYEKSSEGKTYEDESPEWFQEDDAVQPNSSYTYVWHATKRSGPENPGSACRAWAYYSAVNVERDIHSGLIGPLLICRKGTLHMERNLPMDMREFVLLFMVFDEKKSWYYEKSKGSRRIESPEEKNAHKFYAINGMIYNLPGLRMYEQEWVRLHLLNMGGSRDIHVVHFHGQTLLDNRTKQHQLGVWPLLPGSFKTLEMKASKPGWWLLDTEVGENQVAGMQTPFLIIDKECKMPMGLSTGVISDSQIKASEYLTYWEPRLARLNNAGSYNAWSIEKTALDFPIKPWIQVDMQKEVVVTGIQTQGAKHYLKSCFTTEFQVAYSSDQTNWQIFRGKSGKSVMYFTGNSDGSTIKENRLDPPIVARYIRIHPTKSYNRPTLRLELQGCEVNGCSTPLGLEDGRIQDKQITASSFKKSWWGDYWEPSLARLNAQGRVNAWQAKANNNKQWLQVDLLKIKKVTAIVTQGCKSLSSEMYVKSYSIQYSDQGVAWKPYRQKSSMVDKIFEGNSNTKGHMKNFFNPPIISRFIRIIPKTWNQSIALRLELFGCDIY.

The N-terminal stretch at 1–19 (MLLVCPCFFLLVVLGTRWA) is a signal peptide. Plastocyanin-like domains follow at residues 30–192 (QLRQ…LLIC), 202–328 (TQKM…IKNC), 347–524 (KRWE…LLIC), and 534–682 (VQRV…DVKC). F5/8 type A domains lie at 30–328 (QLRQ…IKNC) and 347–682 (KRWE…DVKC). The Ca(2+) site is built by aspartate 138 and aspartate 139. 3 N-linked (GlcNAc...) asparagine glycosylation sites follow: asparagine 176, asparagine 238, and asparagine 381. A Phosphothreonine modification is found at threonine 638. A b region spans residues 691-1533 (SYEIYEPPAP…PDTIAAWYLR (843 aa)). Sulfotyrosine is present on residues tyrosine 692 and tyrosine 725. The propeptide at 737 to 1533 (SFKNSSLNPE…PDTIAAWYLR (797 aa)) is activation peptide (connecting region). A glycan (N-linked (GlcNAc...) asparagine) is linked at asparagine 841. Disordered stretches follow at residues 884 to 904 (PAGK…MKSE), 947 to 1045 (DVDK…FPDR), and 1059 to 1144 (ETAL…YDLS). The tract at residues 892–908 (SNPKNSYSGMKSEEDIP) is 1 X 17 AA tandem repeats. One copy of the 1-1 repeat lies at 892–911 (SNPKNSYSGMKSEEDIPSEL). A Phosphoserine modification is found at serine 903. The span at 951 to 975 (LTNSPQNQNITVPRGESTSHTNTTR) shows a compositional bias: polar residues. Asparagine 959 and asparagine 972 each carry an N-linked (GlcNAc...) asparagine glycan. Positions 1010–1021 (RTRKKKKNKKLA) are enriched in basic residues. Polar residues-rich tracts occupy residues 1059-1099 (ETAL…SLDL) and 1120-1134 (THST…SPPE). 32 consecutive repeat copies span residues 1175–1183 (IPSSDLSLF), 1184–1192 (TISPELDQT), 1193–1201 (IIYPDLDQL), 1202–1210 (LLSPEDNQK), 1211–1219 (TSSPDLGQV), 1220–1228 (PLSPDDNQK), 1229–1237 (TSSPDLGQV), 1238–1246 (SLSPDDNQK), 1247–1255 (TSSPDLGQV), 1256–1264 (PLSLDDNQK), 1265–1273 (TTSPDLGQV), 1274–1282 (PLSPDDNQM), 1283–1291 (ITSPDLGQV), 1292–1299 (PLSSDNQK), 1300–1308 (TSSPDLGQV), 1309–1316 (PLFPEDNQ), 1317–1325 (NYFLDLSQV), 1326–1334 (PLSSDQNQE), 1335–1341 (TSSTDLL), 1342–1350 (TLSPDFGQT), 1351–1359 (VLSPDLDQL), 1360–1368 (PLPSDNSQV), 1369–1377 (TVSPDLSLL), 1378–1386 (TLSPDFNEI), 1387–1395 (ILAPDLGQV), 1396–1404 (TLSPDLIQT), 1405–1413 (NPALNHGHK), 1414–1422 (ASSADPDQA), 1423–1431 (SYPPDSGQA), 1432–1440 (SSLPELNRT), 1441–1449 (LPHPDLTHI), and 1452–1461 (PSPSPTLNNT). The interval 1175-1461 (IPSSDLSLFT…PSPSPTLNNT (287 aa)) is 32 X 9 AA approximate tandem repeats of [TNP]-L-S-P-D-L-S-Q-T. The disordered stretch occupies residues 1204–1312 (SPEDNQKTSS…PDLGQVPLFP (109 aa)). The segment covering 1228-1251 (KTSSPDLGQVSLSPDDNQKTSSPD) has biased composition (polar residues). Residues 1292–1304 (PLSSDNQKTSSPD) are compositionally biased toward polar residues. Positions 1403–1462 (QTNPALNHGHKASSADPDQASYPPDSGQASSLPELNRTLPHPDLTHIPPPSPSPTLNNTS) are disordered. Asparagine 1438 is a glycosylation site (N-linked (GlcNAc...) asparagine). Plastocyanin-like domains follow at residues 1538-1711 (HKKF…LLIC) and 1721-1866 (NLPM…DKEC). In terms of domain architecture, F5/8 type A 3 spans 1538-1866 (HKKFYYIAAE…TPFLIIDKEC (329 aa)). Cu cation-binding residues include histidine 1802 and histidine 1804. An N-linked (GlcNAc...) asparagine glycan is attached at asparagine 1811. F5/8 type C domains lie at 1866–2020 (CKMP…LQGC) and 2025–2180 (CSTP…LFGC). 2 cysteine pairs are disulfide-bonded: cysteine 1866/cysteine 2020 and cysteine 2025/cysteine 2180.

The protein belongs to the multicopper oxidase family. As to quaternary structure, factor Va, the activated form of factor V, is composed of a heavy chain and a light chain, non-covalently bound. The interaction between the two chains is calcium-dependent. Forms heterodimer with SERPINA5. Post-translationally, thrombin activates factor V proteolytically to the active cofactor, factor Va (formation of a heavy chain at the N-terminus and a light chain at the C-terminus). In terms of processing, sulfation is required for efficient thrombin cleavage and activation and for full procoagulant activity. Activated protein C inactivates factor V and factor Va by proteolytic degradation.

The protein localises to the secreted. Inhibited by SERPINA5. Its function is as follows. Central regulator of hemostasis. It serves as a critical cofactor for the prothrombinase activity of factor Xa that results in the activation of prothrombin to thrombin. The sequence is that of Coagulation factor V (F5) from Mus musculus (Mouse).